Reading from the N-terminus, the 220-residue chain is Iron-sulfur cluster repair protein YtfE (220 aa).

It belongs to the RIC family. YtfE subfamily. In terms of assembly, homodimer.

It localises to the cytoplasm. Functionally, di-iron-containing protein involved in the repair of iron-sulfur clusters damaged by oxidative and nitrosative stress conditions. The sequence is that of Iron-sulfur cluster repair protein YtfE from Enterobacter sp. (strain 638).